The sequence spans 240 residues: Pathogenesis-related thaumatin-like protein 3.5 (240 aa).

Positions 1 to 20 (MASLRLATLAMMVLFGSCRA) are cleaved as a signal peptide. 8 cysteine pairs are disulfide-bonded: C31–C237, C79–C89, C94–C100, C145–C227, C150–C210, C158–C173, C177–C186, and C187–C197.

Belongs to the thaumatin family. Strongly expressed in pollen grains. Also present at weak levels in seedling roots, in sapling stems and in developing male strobili.

Its function is as follows. May be involved in disease resistance. The sequence is that of Pathogenesis-related thaumatin-like protein 3.5 from Cryptomeria japonica (Japanese cedar).